The primary structure comprises 240 residues: 26.7 kDa heat shock protein, chloroplastic (240 aa).

A chloroplast-targeting transit peptide spans 1-43 (MAAPFALVSRVSPAARLPIRAAWRRARPTVGLPSSGRARQLAV). Positions 59–84 (HVNQDGGNQQGNAVQRRPRRSSALDG) are disordered. One can recognise a sHSP domain in the interval 126–240 (LATGEVRMPW…ERKVIDVQVQ (115 aa)).

It belongs to the small heat shock protein (HSP20) family. As to quaternary structure, may form oligomeric structures. Expressed in roots, stems, leaves, spikelets and embryos.

Its subcellular location is the plastid. It is found in the chloroplast. In Oryza sativa subsp. japonica (Rice), this protein is 26.7 kDa heat shock protein, chloroplastic (HSP26.7).